The following is a 130-amino-acid chain: Glycine cleavage system H protein (130 aa).

The Lipoyl-binding domain maps to T24–K106. N6-lipoyllysine is present on K65.

This sequence belongs to the GcvH family. The glycine cleavage system is composed of four proteins: P, T, L and H. (R)-lipoate serves as cofactor.

Functionally, the glycine cleavage system catalyzes the degradation of glycine. The H protein shuttles the methylamine group of glycine from the P protein to the T protein. The protein is Glycine cleavage system H protein of Teredinibacter turnerae (strain ATCC 39867 / T7901).